The chain runs to 410 residues: UDP-N-acetylglucosamine--N-acetylmuramyl-(pentapeptide) pyrophosphoryl-undecaprenol N-acetylglucosamine transferase (410 aa).

The segment at 1–35 is disordered; the sequence is MKDTVSQPAGGRGATAPRPADAASPSCGSSPSADS. Residues 14–35 are compositionally biased toward low complexity; the sequence is ATAPRPADAASPSCGSSPSADS. UDP-N-acetyl-alpha-D-glucosamine is bound by residues 45 to 47, N167, R204, S238, and Q334; that span reads TAG.

This sequence belongs to the glycosyltransferase 28 family. MurG subfamily.

The protein localises to the cell membrane. The enzyme catalyses di-trans,octa-cis-undecaprenyl diphospho-N-acetyl-alpha-D-muramoyl-L-alanyl-D-glutamyl-meso-2,6-diaminopimeloyl-D-alanyl-D-alanine + UDP-N-acetyl-alpha-D-glucosamine = di-trans,octa-cis-undecaprenyl diphospho-[N-acetyl-alpha-D-glucosaminyl-(1-&gt;4)]-N-acetyl-alpha-D-muramoyl-L-alanyl-D-glutamyl-meso-2,6-diaminopimeloyl-D-alanyl-D-alanine + UDP + H(+). It participates in cell wall biogenesis; peptidoglycan biosynthesis. Its function is as follows. Cell wall formation. Catalyzes the transfer of a GlcNAc subunit on undecaprenyl-pyrophosphoryl-MurNAc-pentapeptide (lipid intermediate I) to form undecaprenyl-pyrophosphoryl-MurNAc-(pentapeptide)GlcNAc (lipid intermediate II). The polypeptide is UDP-N-acetylglucosamine--N-acetylmuramyl-(pentapeptide) pyrophosphoryl-undecaprenol N-acetylglucosamine transferase (Mycobacterium tuberculosis (strain ATCC 25177 / H37Ra)).